The following is a 237-amino-acid chain: UPF0758 protein Veis_1654 (237 aa).

The MPN domain occupies 115-237 (VFDTPDAVKH…ALSMAEMGLL (123 aa)). Zn(2+) contacts are provided by histidine 186, histidine 188, and aspartate 199. Residues 186-199 (HNHPSGSVQPSRAD) carry the JAMM motif motif.

Belongs to the UPF0758 family.

This chain is UPF0758 protein Veis_1654, found in Verminephrobacter eiseniae (strain EF01-2).